The chain runs to 317 residues: Bile salt hydrolase/transferase (317 aa).

C2 (nucleophile; acyl-thioester intermediate) is an active-site residue. C2 and R18 together coordinate deoxycholate. N82 provides a ligand contact to taurine.

It belongs to the peptidase C59 family. In terms of assembly, homotetramer. The tetramer consists of a dimer of dimers.

The enzyme catalyses glycocholate + H2O = cholate + glycine. The catalysed reaction is glycodeoxycholate + H2O = deoxycholate + glycine. It carries out the reaction chenodeoxycholate + glycine = glycochenodeoxycholate + H2O. It catalyses the reaction cholate + taurine = taurocholate + H2O. The enzyme catalyses taurodeoxycholate + H2O = deoxycholate + taurine. The catalysed reaction is taurochenodeoxycholate + H2O = chenodeoxycholate + taurine. It carries out the reaction an L-alpha-amino acid + cholate = an N-choloyl-L-alpha-amino acid + H2O. It catalyses the reaction an L-alpha-amino acid + taurocholate = an N-choloyl-L-alpha-amino acid + taurine. The enzyme catalyses cholate + L-alanine = L-alanocholate + H2O. The catalysed reaction is taurocholate + L-alanine = L-alanocholate + taurine. It carries out the reaction cholate + L-serine = L-serocholate + H2O. It catalyses the reaction taurocholate + L-serine = L-serocholate + taurine. The enzyme catalyses cholate + L-histidine = L-histidocholate + H2O. The catalysed reaction is taurocholate + L-histidine = L-histidocholate + taurine. It participates in lipid metabolism; bile acid biosynthesis. In terms of biological role, possesses dual functions in bile acid metabolism. Acts as a bile salt hydrolase that catalyzes the deconjugation of glycine- and taurine-linked bile salts, which occurs naturally in the intestines of humans, releasing amino acid residues and deconjugated bile salts (bile acids). Can hydrolyze the amide bond in all six major human conjugated bile salts, namely glycocholate (GCA), glycodeoxycholate (GDCA), glycochenodeoxycholate (GCDCA), taurocholate (TCA), taurodeoxycholate (TDCA) and taurochenodeoxycholate (TCDCA). Shows a slight preference for glycine-conjugated bile acids as substrates. Also acts as an amine N-acyltransferase that conjugates a wide variety of amino acids to conjugated and non-conjugated bile acids, thus producing bacterial bile acid amidates (BBAAs) - also named microbially conjugated bile acids (MCBAs) - in the gastrointestinal tract. These BBAAs may facilitate communication between the microbiota and host through the activation of human ligand-activated transcription factors. The sequence is that of Bile salt hydrolase/transferase from Bifidobacterium longum subsp. longum (strain ATCC 15707 / DSM 20219 / JCM 1217 / NCTC 11818 / E194b).